A 369-amino-acid polypeptide reads, in one-letter code: DNA replication and repair protein RecF (369 aa).

ATP is bound at residue 30 to 37; the sequence is GENAQGKT.

Belongs to the RecF family.

The protein resides in the cytoplasm. The RecF protein is involved in DNA metabolism; it is required for DNA replication and normal SOS inducibility. RecF binds preferentially to single-stranded, linear DNA. It also seems to bind ATP. The sequence is that of DNA replication and repair protein RecF from Oceanobacillus iheyensis (strain DSM 14371 / CIP 107618 / JCM 11309 / KCTC 3954 / HTE831).